We begin with the raw amino-acid sequence, 207 residues long: Nucleoplasmin-2 (207 aa).

Positions 1–15 (MSRHSTSSVTETTAK) are enriched in polar residues. Disordered stretches follow at residues 1-20 (MSRHSTSSVTETTAKNMLWG) and 121-207 (DLTW…VTKK). Over residues 123 to 147 (TWEDDEEEEEEEEEEDEDEDADISL) the composition is skewed to acidic residues. The acidic tract A2 stretch occupies residues 129–152 (EEEEEEEEEDEDEDADISLEEIPV). The short motif at 165–180 (SIAKKKKVEKEEDETV) is the Bipartite nuclear localization signal element. Residues 198-207 (PRAKKPVTKK) are compositionally biased toward basic residues.

This sequence belongs to the nucleoplasmin family. In terms of assembly, homopentamer, when bound to H2A-H2B dimers only. Homodecamer of two stacked pentamers, when bound to H2A-H2B dimers and H3-H4 tetramers simultaneously. In terms of tissue distribution, ovary specific.

The protein localises to the nucleus. In terms of biological role, core histones chaperone involved in chromatin reprogramming, specially during fertilization and early embryonic development. Probably involved in sperm DNA decondensation during fertilization. The chain is Nucleoplasmin-2 (Npm2) from Mus musculus (Mouse).